A 456-amino-acid polypeptide reads, in one-letter code: Major facilitator superfamily domain-containing protein 10 (456 aa).

3 consecutive transmembrane segments (helical) span residues 25 to 45 (VIIV…LLLP), 87 to 107 (VLFG…SAPL), and 114 to 136 (YLGR…AVWA). N-linked (GlcNAc...) asparagine glycosylation is present at N159. The next 8 membrane-spanning stretches (helical) occupy residues 179–199 (AVIG…GAFL), 203–223 (MVPW…FCFL), 278–298 (LVYF…SFLA), 311–328 (KMFF…GTYA), 345–365 (LLLV…TLGL), 366–386 (GLML…TMVS), 403–423 (SLGA…YWLT), and 424–444 (GAQV…LLLW).

It belongs to the major facilitator superfamily. As to expression, esxpressed in luminal membrane of renal tubules. Expressed at the surface of eosinophils (at protein level).

The protein resides in the nucleus inner membrane. The protein localises to the cell membrane. In terms of biological role, probable organic anion transporter which may serve as a transporter for some non-steroidal anti-inflammatory drugs (NSAIDs) as well as other organic anions across the luminal membranes of renal proximal tubules at the final excretion step into the urine. The protein is Major facilitator superfamily domain-containing protein 10 (Mfsd10) of Mus musculus (Mouse).